The chain runs to 1516 residues: EF-hand calcium-binding domain-containing protein 6 (1516 aa).

The tract at residues 1 to 23 is disordered; sequence MKRNGTRLNFAKANSTKSGSTRA. A compositionally biased stretch (polar residues) spans 12–21; the sequence is KANSTKSGST. 5 consecutive EF-hand domains span residues 96–131, 197–232, 321–356, 444–462, and 528–563; these read SRRDDIKKVFQILDRNHNQMVTKGDLKRVITAFLIP, RNMRSIRKVFQVMDVNNTGLVQPQELRRVLETFCLR, KSYEKIEKALSAGDPSKGGYISLNYLKVVLDTFIYR, SGHITWEELRHILNCMVAK, and RNLQAFYSMLQSYDLRDTGTIGKNNFRKVMRVFCPY. Positions 109, 111, 113, 115, 120, 210, 212, 214, and 221 each coordinate Ca(2+). The segment at 618–638 is disordered; it reads EEPGQQDERTQPSGEKTSEIN. Residues 628–638 are compositionally biased toward polar residues; that stretch reads QPSGEKTSEIN. 6 EF-hand domains span residues 674–690, 763–798, 905–940, 1086–1121, 1193–1228, and 1229–1264; these read KINQEEFRKVLERSGMP, ESFRDVYSAFFRIDLDRDGIISMHDFHRLLQYLQLN, LTPREFEKLWQNYDTEGRGYITYQEFLHRLGIRYSP, SSQPALVEAFSALDKEDTGFVKAMEFGDVLRSVCQK, SHYHTIVQEFENFDTLKSNTVSRDEFRSICTRHIQI, and LTDEQFDRLWSELPVNAKGRLKYQDFLSKLSIERVP. Residues Asp-776, Asp-778, Asp-780, and Asp-787 each contribute to the Ca(2+) site. Thr-906 bears the Phosphothreonine mark. Positions 1263 to 1318 are disordered; that stretch reads VPSPPMAAGDSGESTMAQRGSSAPEFSQGTRSNLYSPPRDSRVGLKSRSHPCTPVG. Ser-1265 carries the phosphoserine modification. The segment covering 1274-1297 has biased composition (polar residues); that stretch reads GESTMAQRGSSAPEFSQGTRSNLY. Ser-1311 carries the phosphoserine modification. 2 positions are modified to phosphothreonine: Thr-1315 and Thr-1319. The segment at 1318 to 1516 is interaction with PARK7; that stretch reads GTPPLQNCEP…YNDFLRAFLQ (199 aa). EF-hand domains are found at residues 1348 to 1373, 1374 to 1409, 1454 to 1484, and 1485 to 1516; these read KEKDTDKQGTISAAEFLALVEKFKLD, ISREESQQLIVKYDLKNNGKFAYCDFIQSCVLLLKA, MRRSFKTYDKNGTGLLSVADFRKVLRQYSIN, and LSEEEFFHVLEYYDKSLSSKISYNDFLRAFLQ. The tract at residues 1422-1516 is interaction with AR; sequence NADKMKEAGM…YNDFLRAFLQ (95 aa). Asp-1462, Asn-1464, Thr-1466, and Asp-1473 together coordinate Ca(2+).

Microtubule inner protein component of sperm flagellar doublet microtubules. Binds PARK7. Part of a ternary complex containing PARK7, EFCAB6/DJBP and AR.

The protein resides in the nucleus. It localises to the cytoplasm. The protein localises to the cytoskeleton. It is found in the flagellum axoneme. In terms of biological role, negatively regulates the androgen receptor by recruiting histone deacetylase complex, and protein DJ-1 antagonizes this inhibition by abrogation of this complex. Microtubule inner protein (MIP) part of the dynein-decorated doublet microtubules (DMTs) in cilia axoneme, which is required for motile cilia beating. In Mus musculus (Mouse), this protein is EF-hand calcium-binding domain-containing protein 6 (Efcab6).